Here is a 147-residue protein sequence, read N- to C-terminus: Small ribosomal subunit protein uS12 (147 aa).

It belongs to the universal ribosomal protein uS12 family. Part of the 30S ribosomal subunit.

Functionally, with S4 and S5 plays an important role in translational accuracy. Located at the interface of the 30S and 50S subunits. The polypeptide is Small ribosomal subunit protein uS12 (Pyrococcus horikoshii (strain ATCC 700860 / DSM 12428 / JCM 9974 / NBRC 100139 / OT-3)).